The chain runs to 270 residues: Formamidopyrimidine-DNA glycosylase (270 aa).

Pro-2 functions as the Schiff-base intermediate with DNA in the catalytic mechanism. Catalysis depends on Glu-3, which acts as the Proton donor. Catalysis depends on Lys-58, which acts as the Proton donor; for beta-elimination activity. 3 residues coordinate DNA: His-91, Arg-110, and Arg-151. The FPG-type zinc finger occupies 236–270 (FVYGRGGEFCKVCGSTLREIRLGQRASVYCPRCQR). The Proton donor; for delta-elimination activity role is filled by Arg-260.

Belongs to the FPG family. Monomer. Zn(2+) is required as a cofactor.

It carries out the reaction Hydrolysis of DNA containing ring-opened 7-methylguanine residues, releasing 2,6-diamino-4-hydroxy-5-(N-methyl)formamidopyrimidine.. It catalyses the reaction 2'-deoxyribonucleotide-(2'-deoxyribose 5'-phosphate)-2'-deoxyribonucleotide-DNA = a 3'-end 2'-deoxyribonucleotide-(2,3-dehydro-2,3-deoxyribose 5'-phosphate)-DNA + a 5'-end 5'-phospho-2'-deoxyribonucleoside-DNA + H(+). Functionally, involved in base excision repair of DNA damaged by oxidation or by mutagenic agents. Acts as a DNA glycosylase that recognizes and removes damaged bases. Has a preference for oxidized purines, such as 7,8-dihydro-8-oxoguanine (8-oxoG). Has AP (apurinic/apyrimidinic) lyase activity and introduces nicks in the DNA strand. Cleaves the DNA backbone by beta-delta elimination to generate a single-strand break at the site of the removed base with both 3'- and 5'-phosphates. This chain is Formamidopyrimidine-DNA glycosylase, found in Pseudomonas aeruginosa (strain LESB58).